Here is a 448-residue protein sequence, read N- to C-terminus: MSVRFSSASRRLGSVRLSSAGAALGAGNACGVPGIGSGFSCAFGGSSLAGGLGMGGASCGAFTANEHGLLSGNEKVTMQNLNDRLASYLENVQALEEANADLEQKIKDWYEKFGPGSCRGLDHDYSRYFPIIDDLRTQIISATAHNANIILQNDNARLTADDFRMKYENELALHQSVDADINGLRRVLDELTLCRTDLEVQLETLSEELAYLKKNHEEEMQALQCAAGGNVNVEMNAAPGVDLTVLLNNMRAEYEALAEQNRRDAEAWFQEKSASLQQQISDDAGATTSARNELTEMKRTLQTLEIELQSLLAMKHSLECSLTETEGNYCTQLAQIQAQISALEEQLHQVRTETEGQKLEYEQLLNVKAHLEKEIETYCRLIDGDEGSCVKAKGQGRPGNQTKDSPKTAIVKTVVEELDPRGKVLSSRVHTLEEKSTKVNKTEQRIPS.

The tract at residues 1-73 (MSVRFSSASR…ANEHGLLSGN (73 aa)) is head. The coil 1A stretch occupies residues 74–109 (EKVTMQNLNDRLASYLENVQALEEANADLEQKIKDW). Residues 74–389 (EKVTMQNLND…RLIDGDEGSC (316 aa)) enclose the IF rod domain. Residues 110-131 (YEKFGPGSCRGLDHDYSRYFPI) are linker 1. Residues 132 to 223 (IDDLRTQIIS…KNHEEEMQAL (92 aa)) are coil 1B. Positions 224–246 (QCAAGGNVNVEMNAAPGVDLTVL) are linker 12. Residues 247-385 (LNNMRAEYEA…ETYCRLIDGD (139 aa)) form a coil 2 region. The segment at 386–448 (EGSCVKAKGQ…VNKTEQRIPS (63 aa)) is tail. A disordered region spans residues 427–448 (SRVHTLEEKSTKVNKTEQRIPS). Residues 430-448 (HTLEEKSTKVNKTEQRIPS) are compositionally biased toward basic and acidic residues.

The protein belongs to the intermediate filament family. Heterotetramer of two type I and two type II keratins. Interacts with KRT6A to form filaments. Expressed in skin. Expressed in the Henle layer and cuticle of the irs in hair follicle bulb. In the hair follicle, expression was observed in all layers of the irs but was stronger in the Henle layer and cuticle than the Huxley layer until the Henle layer differentiated (at protein level).

The protein localises to the cytoplasm. Functionally, essential for the proper assembly of type I and type II keratin protein complexes and formation of keratin intermediate filaments in the inner root sheath (irs). The protein is Keratin, type I cytoskeletal 27 of Mus musculus (Mouse).